Reading from the N-terminus, the 167-residue chain is Crossover junction endodeoxyribonuclease RuvC (167 aa).

Active-site residues include D7, E67, and D140. Mg(2+) is bound by residues D7, E67, and D140.

Belongs to the RuvC family. Homodimer which binds Holliday junction (HJ) DNA. The HJ becomes 2-fold symmetrical on binding to RuvC with unstacked arms; it has a different conformation from HJ DNA in complex with RuvA. In the full resolvosome a probable DNA-RuvA(4)-RuvB(12)-RuvC(2) complex forms which resolves the HJ. Mg(2+) is required as a cofactor.

It localises to the cytoplasm. The catalysed reaction is Endonucleolytic cleavage at a junction such as a reciprocal single-stranded crossover between two homologous DNA duplexes (Holliday junction).. In terms of biological role, the RuvA-RuvB-RuvC complex processes Holliday junction (HJ) DNA during genetic recombination and DNA repair. Endonuclease that resolves HJ intermediates. Cleaves cruciform DNA by making single-stranded nicks across the HJ at symmetrical positions within the homologous arms, yielding a 5'-phosphate and a 3'-hydroxyl group; requires a central core of homology in the junction. The consensus cleavage sequence is 5'-(A/T)TT(C/G)-3'. Cleavage occurs on the 3'-side of the TT dinucleotide at the point of strand exchange. HJ branch migration catalyzed by RuvA-RuvB allows RuvC to scan DNA until it finds its consensus sequence, where it cleaves and resolves the cruciform DNA. The polypeptide is Crossover junction endodeoxyribonuclease RuvC (Moorella thermoacetica (strain ATCC 39073 / JCM 9320)).